Reading from the N-terminus, the 67-residue chain is Mu-conotoxin TsIIIA (67 aa).

A signal peptide spans 1-20 (MMSKLGVLLTICLLLFPLTA). Positions 21–48 (VPLDGDQPADQPAERKQNEQHPLFDQKR) are excised as a propeptide. Disulfide bonds link Cys50–Cys59, Cys51–Cys64, and Cys55–Cys65.

Belongs to the conotoxin M superfamily. In terms of tissue distribution, expressed by the venom duct.

The protein resides in the secreted. In terms of biological role, mu-conotoxins block voltage-gated sodium channels (Nav). This toxin specifically inhibits mammalian Nav1.8/SCN10A sodium currents (IC(50)=2.11 uM) without inducing a shift in the current-voltage relationship of this channel. In vivo, shows potent analgesic activity in a mice hotplate analgesic assay. In addition, this toxin has better analgesic effects than Ziconotide, an analgesic drug. The polypeptide is Mu-conotoxin TsIIIA (Conus tessulatus (Tessellate cone)).